A 243-amino-acid polypeptide reads, in one-letter code: Uridylate kinase (243 aa).

Residue 15–18 (KLSG) participates in ATP binding. Positions 23-28 (GEEGFG) are involved in allosteric activation by GTP. A UMP-binding site is contributed by Gly-57. 2 residues coordinate ATP: Gly-58 and Arg-62. Residues Asp-77 and 138–145 (TGNPFCTT) each bind UMP. ATP contacts are provided by Thr-165, Tyr-171, and Asp-174.

It belongs to the UMP kinase family. In terms of assembly, homohexamer.

Its subcellular location is the cytoplasm. It catalyses the reaction UMP + ATP = UDP + ADP. The protein operates within pyrimidine metabolism; CTP biosynthesis via de novo pathway; UDP from UMP (UMPK route): step 1/1. Allosterically activated by GTP. Inhibited by UTP. Catalyzes the reversible phosphorylation of UMP to UDP. The chain is Uridylate kinase from Shewanella denitrificans (strain OS217 / ATCC BAA-1090 / DSM 15013).